Here is a 794-residue protein sequence, read N- to C-terminus: Phenylalanine--tRNA ligase beta subunit (794 aa).

One can recognise a tRNA-binding domain in the interval 39-148 (APAFDNVVVA…SDAPVGQAIR (110 aa)). The region spanning 399-474 (PVRKPVLLRT…RLYGYDNIPS (76 aa)) is the B5 domain. Residues D452, D458, E461, and E462 each contribute to the Mg(2+) site. The region spanning 700–793 (SKFPPVIRDL…FEQAFGAQLR (94 aa)) is the FDX-ACB domain.

Belongs to the phenylalanyl-tRNA synthetase beta subunit family. Type 1 subfamily. In terms of assembly, tetramer of two alpha and two beta subunits. The cofactor is Mg(2+).

Its subcellular location is the cytoplasm. It carries out the reaction tRNA(Phe) + L-phenylalanine + ATP = L-phenylalanyl-tRNA(Phe) + AMP + diphosphate + H(+). This is Phenylalanine--tRNA ligase beta subunit from Dechloromonas aromatica (strain RCB).